The following is a 313-amino-acid chain: E3 ubiquitin-protein ligase RNF126 (313 aa).

The residue at position 2 (A2) is an N-acetylalanine. Position 5 is a phosphoserine (S5). A required for interaction with BAG6 region spans residues 5-101 (SPQPGRYFCH…FEIPTFPPGA (97 aa)). Zn(2+) contacts are provided by C13, C16, C29, and C32. Residues 13 to 32 (CHCCSVEIVPRLPDYICPRC) form a C4-type zinc finger. 2 disordered regions span residues 42 to 64 (EETR…SRQQ) and 96 to 128 (TFPP…ARQP). Polar residues predominate over residues 47–64 (AENGSAPSTASADQSRQQ). Positions 104–117 (DDSRDPESRREREQ) are enriched in basic and acidic residues. Residues 118 to 128 (HSRHRYGARQP) are compositionally biased toward basic residues. A sufficient for interaction with AICDA region spans residues 203–306 (TGPPPADKEK…SSSSSSSPGN (104 aa)). The RING-type zinc-finger motif lies at 232 to 273 (CPVCKDDYGLGEHVRQLPCNHLFHDGCIVPWLEQHDSCPVCR). Residues 280–313 (NTATDPPGLAGVSFSSSSSSSSSSPGNENPASSS) are disordered. Residues 292-313 (SFSSSSSSSSSSPGNENPASSS) show a composition bias toward low complexity.

As to quaternary structure, interacts with CCDC50, EGFR, FLT3 and SCAMP3. Interacts with BAG6 (via ubiquitin-like domain); required for BAG6-dependent ubiquitination of proteins mislocalized to the cytosol. Interacts with CDKN1A. Interacts with AICDA. Post-translationally, ubiquitinated. May undergo autoubiquitination.

The protein resides in the cytoplasm. It localises to the nucleus. It carries out the reaction S-ubiquitinyl-[E2 ubiquitin-conjugating enzyme]-L-cysteine + [acceptor protein]-L-lysine = [E2 ubiquitin-conjugating enzyme]-L-cysteine + N(6)-ubiquitinyl-[acceptor protein]-L-lysine.. It functions in the pathway protein modification; protein ubiquitination. Functionally, E3 ubiquitin-protein ligase that mediates ubiquitination oF target proteins. Depending on the associated E2 ligase, mediates 'Lys-27'-, 'Lys-29'-, 'Lys-48'- and/or 'Lys-63'-linked polyubiquitination of substrates. Part of a BAG6-dependent quality control process ensuring that proteins of the secretory pathway that are mislocalized to the cytosol are degraded by the proteasome. Probably acts by providing the ubiquitin ligase activity associated with the BAG6 complex and be responsible for ubiquitination of the hydrophobic mislocalized proteins and their targeting to the proteasome. May also play a role in the endosomal recycling of IGF2R, the cation-independent mannose-6-phosphate receptor. May play a role in the endosomal sorting and degradation of several membrane receptors including EGFR, FLT3, MET and CXCR4, by mediating their ubiquitination. By ubiquitinating CDKN1A/p21 and targeting it for degradation, may also promote cell proliferation. May monoubiquitinate AICDA. Acts as a regulator of DNA repair by mediating 'Lys-27'- and 'Lys-29'-linked polyubiquitination of MRE11, thereby promoting the exonuclease activity of MRE11. The sequence is that of E3 ubiquitin-protein ligase RNF126 from Bos taurus (Bovine).